We begin with the raw amino-acid sequence, 1392 residues long: DNA-directed RNA polymerase subunit beta'' (1392 aa).

Residues C224, C295, C302, and C305 each contribute to the Zn(2+) site.

The protein belongs to the RNA polymerase beta' chain family. RpoC2 subfamily. In plastids the minimal PEP RNA polymerase catalytic core is composed of four subunits: alpha, beta, beta', and beta''. When a (nuclear-encoded) sigma factor is associated with the core the holoenzyme is formed, which can initiate transcription. Zn(2+) is required as a cofactor.

It localises to the plastid. The protein localises to the chloroplast. The catalysed reaction is RNA(n) + a ribonucleoside 5'-triphosphate = RNA(n+1) + diphosphate. In terms of biological role, DNA-dependent RNA polymerase catalyzes the transcription of DNA into RNA using the four ribonucleoside triphosphates as substrates. The polypeptide is DNA-directed RNA polymerase subunit beta'' (Eucalyptus globulus subsp. globulus (Tasmanian blue gum)).